The chain runs to 461 residues: Protein DVR-1 homolog (461 aa).

The first 30 residues, 1 to 30 (MEYSRKTYLDLNIMAKYILILSLFFGPGLS), serve as a signal peptide directing secretion. The propeptide occupies 31 to 338 (WDVFYSGDED…QKKGGKRPRK (308 aa)). A glycan (N-linked (GlcNAc...) asparagine) is linked at Asn-149. The segment at 317–351 (SHLRRNRRAATRQKKGGKRPRKPDTDNDIASRDSA) is disordered. A compositionally biased stretch (basic residues) spans 318-337 (HLRRNRRAATRQKKGGKRPR). Residues 338 to 347 (KPDTDNDIAS) show a composition bias toward basic and acidic residues. 3 cysteine pairs are disulfide-bonded: Cys-360/Cys-426, Cys-389/Cys-458, and Cys-393/Cys-460. Asn-402 carries N-linked (GlcNAc...) asparagine glycosylation.

Belongs to the TGF-beta family. In terms of assembly, homodimer; disulfide-linked.

It localises to the secreted. In Strongylocentrotus purpuratus (Purple sea urchin), this protein is Protein DVR-1 homolog (DVR1).